The chain runs to 209 residues: MTLASQIATQLLDIKAVYLKPEDPFTWASGIKSPIYTDNRVTLSYPKTRDLIENGFVETIRAHFPEVEVIAGTATAGIPHGAIIADKMTLPFVYIRSKPKDHGAGNQIEGRVLKGQKMVIIEDLISTGGSVLDAAAAASREGADVLGVVAIFTYELPKASQNFKEAGIKLITLSNYTELIAVAKLQGYITNDGLHLLKKFKEDQVNWQQ.

5-phospho-alpha-D-ribose 1-diphosphate contacts are provided by residues Arg96, Lys100, His102, and 122–130; that span reads EDLISTGGS. Ser126 provides a ligand contact to orotate.

It belongs to the purine/pyrimidine phosphoribosyltransferase family. PyrE subfamily. In terms of assembly, homodimer. Requires Mg(2+) as cofactor.

The catalysed reaction is orotidine 5'-phosphate + diphosphate = orotate + 5-phospho-alpha-D-ribose 1-diphosphate. Its pathway is pyrimidine metabolism; UMP biosynthesis via de novo pathway; UMP from orotate: step 1/2. Functionally, catalyzes the transfer of a ribosyl phosphate group from 5-phosphoribose 1-diphosphate to orotate, leading to the formation of orotidine monophosphate (OMP). The sequence is that of Orotate phosphoribosyltransferase from Streptococcus pyogenes serotype M12 (strain MGAS2096).